Reading from the N-terminus, the 129-residue chain is Small ribosomal subunit protein uS9 (129 aa).

This sequence belongs to the universal ribosomal protein uS9 family.

The sequence is that of Small ribosomal subunit protein uS9 from Chlorobium phaeovibrioides (strain DSM 265 / 1930) (Prosthecochloris vibrioformis (strain DSM 265)).